A 107-amino-acid chain; its full sequence is uncharacterized protein (107 aa).

The chain crosses the membrane as a helical span at residues 12-32 (IILNIFLALLLVYFIFHCIYG).

The protein resides in the membrane. This is an uncharacterized protein from Rickettsia prowazekii (strain Madrid E).